We begin with the raw amino-acid sequence, 1059 residues long: Zinc finger protein 658 (1059 aa).

Residues 8–79 (VSFQDVTVEF…EDEFLNQRYP (72 aa)) form the KRAB domain. Lysine 178 participates in a covalent cross-link: Glycyl lysine isopeptide (Lys-Gly) (interchain with G-Cter in SUMO2). Residues 325–347 (FESNKCEENFSQSSAHIVHQKTQ) form a C2H2-type 1; degenerate zinc finger. A C2H2-type 2; degenerate zinc finger spans residues 352–375 (FGEHNECTDALYQKLDFTAHQRIH). Residues 381-406 (YLSDEHGKCRKSFYRKAHLIQHQRPH) form a C2H2-type 3; degenerate zinc finger. A C2H2-type 4; degenerate zinc finger spans residues 412 to 434 (YQYEECAKSFCSSSHPIQHPGTY). 14 consecutive C2H2-type zinc fingers follow at residues 440–462 (YECN…LRIH), 518–540 (YECI…QRIH), 546–568 (YECV…QRVH), 574–596 (YECN…QRIH), 602–624 (YECS…HRIH), 630–652 (YECN…QRIH), 658–680 (YECN…QRIH), 686–708 (YECS…QRIH), 714–736 (YECN…QNIH), 742–764 (YECS…RRIH), 770–792 (YECS…ERIH), 798–820 (YECN…QRIH), 826–848 (YECN…QRIH), and 854–876 (YECN…HRIH). The C2H2-type 19; degenerate zinc-finger motif lies at 882-904 (YECNDCGKTFSKTSHLRAHLRTR). 5 consecutive C2H2-type zinc fingers follow at residues 910–932 (YECS…QRVH), 938–960 (YECN…QRIH), 966–988 (YECN…QRIH), 994–1016 (YECN…QRIH), and 1022–1045 (YECD…TRMH).

It belongs to the krueppel C2H2-type zinc-finger protein family.

It localises to the nucleus. Mediates transcriptional repression in response to zinc. Represses several genes, including SLC30A5, SLC30A10 and CBWD1, by binding to the zinc transcriptional regulatory element (ZTRE) (5'-C[AC]C[TAG]CC[TC]-N(0-50)-[GA]G[ATC]G[TG]G-3') found in the promoter region. May play a role in the control of ribosome biogenesis, regulating predominantly rRNA levels, as well as those of several ribosomal proteins, thus coordinating this highly zinc-demanding process with the available zinc supply. This is Zinc finger protein 658 (ZNF658) from Homo sapiens (Human).